The sequence spans 343 residues: Geranylgeranyl pyrophosphate synthase (343 aa).

Over residues 1 to 12 the composition is skewed to basic and acidic residues; the sequence is MAYTVEPREHSK. A disordered region spans residues 1–26; sequence MAYTVEPREHSKNTTLPTVAMPPSPP. Positions 69, 72, and 101 each coordinate isopentenyl diphosphate. The Mg(2+) site is built by Asp-108 and Asp-112. Residue Arg-117 coordinates dimethylallyl diphosphate. Arg-118 is a binding site for isopentenyl diphosphate. Positions 196 and 229 each coordinate dimethylallyl diphosphate. Asp-232 is a Mg(2+) binding site. Positions 236, 246, and 256 each coordinate dimethylallyl diphosphate.

The protein belongs to the FPP/GGPP synthase family. Mg(2+) serves as cofactor.

It carries out the reaction isopentenyl diphosphate + dimethylallyl diphosphate = (2E)-geranyl diphosphate + diphosphate. It catalyses the reaction isopentenyl diphosphate + (2E)-geranyl diphosphate = (2E,6E)-farnesyl diphosphate + diphosphate. The enzyme catalyses isopentenyl diphosphate + (2E,6E)-farnesyl diphosphate = (2E,6E,10E)-geranylgeranyl diphosphate + diphosphate. The protein operates within mycotoxin biosynthesis. Geranylgeranyl pyrophosphate synthase; part of the gene cluster that mediates the biosynthesis of aphidicolin, a specific inhibitor of eukaryotic DNA synthesis and DNA polymerase alpha. The geranylgeranyl pyrophosphate synthase GGS is required for supplying a sufficient amount of geranylgeranyl diphosphate (GGDP), the general precursor of diterpenes. The diterpene synthase ACS then catalyzes the conversion of geranylgeranyl diphosphate to aphidicolan-16-beta-ol via the intermediate syn-copalyldiphosphate (syn-CDP). In addition to aphidicolan-16-beta-ol, the enzyme also produces low levels of amphidicol-15-ene and amphidicol-16-ene. The cytochrome P450 monooxygenase P450-2 then catalyzes the two-step hydroxylation from aphidicolan-16-beta-ol to 3-deoxyaphidicolin via a 17,3-deoxyaphidicolin intermediate. Finally, the cytochrome P450 monooxygenase P450-1 converts 3-deoxyaphidicolin to aphidicolin. This chain is Geranylgeranyl pyrophosphate synthase (GGS), found in Neocamarosporium betae (Beet black rot fungus).